The primary structure comprises 53 residues: uncharacterized protein (53 aa).

This is an uncharacterized protein from Rickettsia conorii (strain ATCC VR-613 / Malish 7).